The following is a 401-amino-acid chain: MEPRRAAPGVPGWGSREAAGSASAAELVYHLAGALGTELQDLARRFGPEAAAGLVPLVVRALELLEQAAVGPAPDSLQVSAQPAEQELRRLREENERLRRELRAGPQEERALLRQLKEVTDRQRDELRAHNRDLRQRGQETEALQEQLQRLLLVNAELRHKLAAMQTQLRAAQDRERERQQPGEAATPQAKERARGQAGRPGHQHGQEPEWATAGAGAPGNPEDPAEAAQQLGRPSEAGQCRFSREEFEQILQERNELKAKVFLLKEELAYFQRELLTDHRVPGLLLEAMKVAVRKQRKKIKAKMLGTPEEAESSEDEAGPWILLSDDKGDHPPPPESKIQSFFGLWYRGKAESSEDETSSPAPSKLGGEEEAQPQSPAPDPPCSALHEHLCLGASAAPEA.

Positions 11 to 101 (PGWGSREAAG…REENERLRRE (91 aa)) constitute an RH1 domain. The stretch at 75–181 (DSLQVSAQPA…AQDRERERQQ (107 aa)) forms a coiled coil. 2 disordered regions span residues 167–239 (TQLR…SEAG) and 304–388 (KMLG…SALH). Positions 172-181 (AQDRERERQQ) are enriched in basic and acidic residues. Residues 240-316 (QCRFSREEFE…GTPEEAESSE (77 aa)) enclose the RH2 domain. Positions 272-333 (FQRELLTDHR…LLSDDKGDHP (62 aa)) are necessary for interaction with RAB7A and RAB34, lysosomal distribution and morphology. T308 bears the Phosphothreonine mark. The segment covering 310–319 (EEAESSEDEA) has biased composition (acidic residues). S314 and S315 each carry phosphoserine.

Homodimer. Interacts with RAB7A. Interacts with RAB34. Identified in a complex with MREG and DCTN1; interacts directly with MREG. Interacts with CLN3. Interacts with FLCN; the interaction is direct and promotes association between RILP and RAB34. In terms of tissue distribution, ubiquitous. Strongly expressed in fetal heart, heart, stomach, spleen, adrenal gland, thyroid gland, salivary gland, fetal liver, liver and lung. Poorly expressed in brain.

It is found in the late endosome membrane. The protein resides in the lysosome membrane. It localises to the cytoplasmic vesicle. The protein localises to the phagosome membrane. In terms of biological role, rab effector playing a role in late endocytic transport to degradative compartments. Involved in the regulation of lysosomal morphology and distribution. Induces recruitment of dynein-dynactin motor complexes to Rab7A-containing late endosome and lysosome compartments. Promotes centripetal migration of phagosomes and the fusion of phagosomes with the late endosomes and lysosomes. This chain is Rab-interacting lysosomal protein (RILP), found in Homo sapiens (Human).